Here is a 275-residue protein sequence, read N- to C-terminus: Digeranylgeranylglyceryl phosphate synthase (275 aa).

8 helical membrane passes run 12–32, 35–55, 88–108, 125–145, 146–166, 200–220, 224–244, and 255–275; these read VHNV…ATTW, TPLF…GYVI, IVLF…PFGF, KLGL…AYYG, GLAS…IFFF, WIIA…PYFL, VIYL…LILH, and SLMK…SLRI.

This sequence belongs to the UbiA prenyltransferase family. DGGGP synthase subfamily. It depends on Mg(2+) as a cofactor.

It is found in the cell membrane. The enzyme catalyses sn-3-O-(geranylgeranyl)glycerol 1-phosphate + (2E,6E,10E)-geranylgeranyl diphosphate = 2,3-bis-O-(geranylgeranyl)-sn-glycerol 1-phosphate + diphosphate. It participates in membrane lipid metabolism; glycerophospholipid metabolism. Functionally, prenyltransferase that catalyzes the transfer of the geranylgeranyl moiety of geranylgeranyl diphosphate (GGPP) to the C2 hydroxyl of (S)-3-O-geranylgeranylglyceryl phosphate (GGGP). This reaction is the second ether-bond-formation step in the biosynthesis of archaeal membrane lipids. This chain is Digeranylgeranylglyceryl phosphate synthase, found in Sulfolobus acidocaldarius (strain ATCC 33909 / DSM 639 / JCM 8929 / NBRC 15157 / NCIMB 11770).